The sequence spans 842 residues: Valine--tRNA ligase (842 aa).

The 'HIGH' region signature appears at 86 to 96 (PFTSGELHMGH). A 'KMSKS' region motif is present at residues 572–576 (RMSKS). Position 575 (Lys-575) interacts with ATP.

The protein belongs to the class-I aminoacyl-tRNA synthetase family. ValS type 2 subfamily.

Its subcellular location is the cytoplasm. The catalysed reaction is tRNA(Val) + L-valine + ATP = L-valyl-tRNA(Val) + AMP + diphosphate. Catalyzes the attachment of valine to tRNA(Val). As ValRS can inadvertently accommodate and process structurally similar amino acids such as threonine, to avoid such errors, it has a 'posttransfer' editing activity that hydrolyzes mischarged Thr-tRNA(Val) in a tRNA-dependent manner. In Saccharolobus solfataricus (strain ATCC 35092 / DSM 1617 / JCM 11322 / P2) (Sulfolobus solfataricus), this protein is Valine--tRNA ligase.